The sequence spans 74 residues: Conotoxin Vc6.11 (74 aa).

Positions 1-19 are cleaved as a signal peptide; that stretch reads MEKLTILLLVAAVLMSTQA. The propeptide occupies 20–41; it reads LIQEQRQKAKINLFSKRKPSAE. 2 disulfide bridges follow: cysteine 55-cysteine 66 and cysteine 61-cysteine 71.

It belongs to the conotoxin O2 superfamily. Expressed by the venom duct.

Its subcellular location is the secreted. In terms of biological role, inhibits voltage-gated ion channels. This Conus victoriae (Queen Victoria cone) protein is Conotoxin Vc6.11.